A 480-amino-acid polypeptide reads, in one-letter code: Thyroid receptor-interacting protein 6 (480 aa).

The segment covering 1 to 12 (MSGPTWLPPKQP) has biased composition (pro residues). The tract at residues 1–43 (MSGPTWLPPKQPEPSRLPQGRSLPRGALGPPTAHGATLQPHPR) is disordered. Arg-25 carries the post-translational modification Asymmetric dimethylarginine; alternate. Arg-25 bears the Omega-N-methylarginine; alternate mark. Tyr-55 carries the phosphotyrosine; by SRC modification. The disordered stretch occupies residues 57–84 (PPGVPEDRGPTWVGSHGTPQRLQGLPPD). Ser-92 is subject to Phosphoserine. The tract at residues 107–134 (LDGGRSHAPRRPDRQAFEAPPPHAYRGG) is disordered. A compositionally biased stretch (basic and acidic residues) spans 108 to 122 (DGGRSHAPRRPDRQA). Arg-111, Arg-183, and Arg-190 each carry omega-N-methylarginine. Ser-193 carries the post-translational modification Phosphoserine. Residues Arg-209 and Arg-242 each carry the omega-N-methylarginine modification. The disordered stretch occupies residues 218-257 (RSHREPGPGVPEGPSGVHIPAGGGRGGGHEPQGPLGQPPE). The span at 238–247 (AGGGRGGGHE) shows a compositional bias: gly residues. LIM zinc-binding domains follow at residues 281 to 339 (GRCG…YVAT), 341 to 401 (EKCS…KFAP), and 404 to 471 (SVCG…RIQE). The interval 473–480 (SATVTTDC) is interaction with MAGI1 and PTPN13.

The protein belongs to the zyxin/ajuba family. In terms of assembly, specifically interacts with the ligand binding domain of the thyroid receptor (TR) in the presence of thyroid hormone. Interacts (via the third LIM domain and C-terminus) with PTPN13 (via the second PDZ domain). Interacts (via the second LIM domain or via the third LIM domain plus C-terminus) with PDLIM4 (via PDZ domain). Found in a complex with PTPN13 and PDLIM4. Interacts with SVIL isoform 2. Interacts with LPAR2 but not other LPA receptors. Interacts with PRKAA2. Interacts with MAGI1. Interacts with SCRIB. In case of infection, interacts with S.typhimurium protein sseI. Phosphorylation at Tyr-55 by SRC is required for enhancement of lysophosphatidic acid-induced cell migration. Tyr-55 is dephosphorylated by PTPN13. Highly expressed in kidney, stomach, lung, heart and testis. Low expression levels in brain, colon, thymus, pancreas and skin. Not expressed in skeletal muscle.

The protein resides in the cytoplasm. Its subcellular location is the cytoskeleton. It is found in the cell junction. The protein localises to the focal adhesion. It localises to the nucleus. Relays signals from the cell surface to the nucleus to weaken adherens junction and promote actin cytoskeleton reorganization and cell invasiveness. Involved in lysophosphatidic acid-induced cell adhesion and migration. Acts as a transcriptional coactivator for NF-kappa-B and JUN, and mediates the transrepression of these transcription factors induced by glucocorticoid receptor. This chain is Thyroid receptor-interacting protein 6 (Trip6), found in Mus musculus (Mouse).